Reading from the N-terminus, the 310-residue chain is MSRFRDRTEDFKDSVRNSAVSIGYNESKVASTMASFIIHKPKERSPFTKAAFKTLDSIKELELFMLKHRKDYVDLHRTTEQEKDSIEQEVAAFIKACKEQIDILINSIRNEEANSKGWLGLPADNFNADSIAHKHGVVLILSEKLHSVTAQFDQLRATRFQDIINRAMPRRKPKRVIKEATPINTTLGNSESIEPDEIQAQPRRLQQQQLLDDETQALQVELSNLLDGARQTETKMVEMSALNHLMATHVLQQAQQIEFLYDQAVEATKNVELGNKELSQAIQRNSSSRTFLLLFFFVLTFSVLFLDWYS.

The Cytoplasmic portion of the chain corresponds to 1-289 (MSRFRDRTED…QAIQRNSSSR (289 aa)). The stretch at 77–114 (RTTEQEKDSIEQEVAAFIKACKEQIDILINSIRNEEAN) forms a coiled coil. Residues 290-310 (TFLLLFFFVLTFSVLFLDWYS) traverse the membrane as a helical; Anchor for type IV membrane protein segment.

It belongs to the syntaxin family. In terms of assembly, part of the t-SNARE complex. Interacts with MAG2.

It is found in the membrane. In terms of biological role, vesicle trafficking protein that functions in the secretory pathway. The chain is Syntaxin-81 (SYP81) from Arabidopsis thaliana (Mouse-ear cress).